Here is a 66-residue protein sequence, read N- to C-terminus: Small ribosomal subunit protein bS21 (66 aa).

Belongs to the bacterial ribosomal protein bS21 family.

The polypeptide is Small ribosomal subunit protein bS21 (Persephonella marina (strain DSM 14350 / EX-H1)).